The sequence spans 488 residues: Peptidoglycan endopeptidase LytF (488 aa).

The signal sequence occupies residues methionine 1–alanine 26. 2 consecutive LysM domains span residues alanine 27 to isoleucine 70 and serine 92 to valine 135. 3 disordered regions span residues isoleucine 70–valine 93, glycine 137–tyrosine 176, and lysine 218–threonine 239. 2 stretches are compositionally biased toward low complexity: residues glycine 72–valine 93 and serine 140–serine 172. In terms of domain architecture, LysM 3 spans glycine 174–threonine 217. A LysM 4 domain is found at threonine 240–leucine 283. Positions lysine 286–threonine 306 are disordered. Positions threonine 307–isoleucine 350 constitute a LysM 5 domain. The NlpC/P60 domain maps to serine 370–phenylalanine 488. The Nucleophile role is filled by cysteine 400. Catalysis depends on histidine 449, which acts as the Proton acceptor. Residue asparagine 461 is part of the active site.

Belongs to the peptidase C40 family.

The protein resides in the secreted. It localises to the cell wall. Is inhibited in vitro by para-hydroxymercuribenzoate, a sulfydryl inhibitor. Its function is as follows. Cell wall hydrolase that cleaves gamma-D-glutamate-meso-diaminopimelate bonds in peptidoglycan. LytF is necessary and sufficient for vegetative daughter cell separation, and also seems to play a role in cell autolysis. The chain is Peptidoglycan endopeptidase LytF (lytF) from Bacillus subtilis (strain 168).